Consider the following 482-residue polypeptide: tRNA sulfurtransferase (482 aa).

The 105-residue stretch at 61–165 (LAIRDALTRI…DDRLLLIKGR (105 aa)) folds into the THUMP domain. Residues 183-184 (LI), Lys-265, Gly-287, and Gln-296 contribute to the ATP site. Cys-344 and Cys-456 are disulfide-bonded. The Rhodanese domain maps to 404–482 (FGPNDVILDI…GFNNVKVYRP (79 aa)). Cys-456 serves as the catalytic Cysteine persulfide intermediate.

The protein belongs to the ThiI family.

The protein resides in the cytoplasm. It carries out the reaction [ThiI sulfur-carrier protein]-S-sulfanyl-L-cysteine + a uridine in tRNA + 2 reduced [2Fe-2S]-[ferredoxin] + ATP + H(+) = [ThiI sulfur-carrier protein]-L-cysteine + a 4-thiouridine in tRNA + 2 oxidized [2Fe-2S]-[ferredoxin] + AMP + diphosphate. It catalyses the reaction [ThiS sulfur-carrier protein]-C-terminal Gly-Gly-AMP + S-sulfanyl-L-cysteinyl-[cysteine desulfurase] + AH2 = [ThiS sulfur-carrier protein]-C-terminal-Gly-aminoethanethioate + L-cysteinyl-[cysteine desulfurase] + A + AMP + 2 H(+). Its pathway is cofactor biosynthesis; thiamine diphosphate biosynthesis. In terms of biological role, catalyzes the ATP-dependent transfer of a sulfur to tRNA to produce 4-thiouridine in position 8 of tRNAs, which functions as a near-UV photosensor. Also catalyzes the transfer of sulfur to the sulfur carrier protein ThiS, forming ThiS-thiocarboxylate. This is a step in the synthesis of thiazole, in the thiamine biosynthesis pathway. The sulfur is donated as persulfide by IscS. This is tRNA sulfurtransferase from Escherichia coli O9:H4 (strain HS).